Here is a 155-residue protein sequence, read N- to C-terminus: Ribosomal RNA large subunit methyltransferase H (155 aa).

Residues L73, G104, and 123–128 (ISKMTF) each bind S-adenosyl-L-methionine.

Belongs to the RNA methyltransferase RlmH family. As to quaternary structure, homodimer.

It is found in the cytoplasm. It catalyses the reaction pseudouridine(1915) in 23S rRNA + S-adenosyl-L-methionine = N(3)-methylpseudouridine(1915) in 23S rRNA + S-adenosyl-L-homocysteine + H(+). Its function is as follows. Specifically methylates the pseudouridine at position 1915 (m3Psi1915) in 23S rRNA. The chain is Ribosomal RNA large subunit methyltransferase H from Francisella tularensis subsp. novicida (strain U112).